The primary structure comprises 136 residues: NADH-quinone oxidoreductase subunit A (136 aa).

The next 3 helical transmembrane spans lie at 20–40 (LAVY…VAWW), 70–90 (VPFY…AYIL), and 99–119 (LGWA…VGLV).

The protein belongs to the complex I subunit 3 family. NDH-1 is composed of 14 different subunits. Subunits NuoA, H, J, K, L, M, N constitute the membrane sector of the complex.

It is found in the cell inner membrane. It carries out the reaction a quinone + NADH + 5 H(+)(in) = a quinol + NAD(+) + 4 H(+)(out). In terms of biological role, NDH-1 shuttles electrons from NADH, via FMN and iron-sulfur (Fe-S) centers, to quinones in the respiratory chain. The immediate electron acceptor for the enzyme in this species is believed to be ubiquinone. Couples the redox reaction to proton translocation (for every two electrons transferred, four hydrogen ions are translocated across the cytoplasmic membrane), and thus conserves the redox energy in a proton gradient. The sequence is that of NADH-quinone oxidoreductase subunit A from Syntrophobacter fumaroxidans (strain DSM 10017 / MPOB).